The sequence spans 961 residues: Vitamin B12-dependent ribonucleotide reductase (961 aa).

Residues 1-23 are disordered; it reads MTETTSGPARGSRTKGTKATKGL. Residues serine 143, 159–160, glycine 188, 364–368, and 554–558 each bind substrate; these read AC, NPCSE, and PTGTI. A disulfide bond links cysteine 160 and cysteine 377. The active-site Proton acceptor is asparagine 364. The active-site Cysteine radical intermediate is the cysteine 366. The active-site Proton acceptor is the glutamate 368.

Belongs to the ribonucleoside diphosphate reductase class-2 family. Homotetramer. Adenosylcob(III)alamin is required as a cofactor.

It carries out the reaction a 2'-deoxyribonucleoside 5'-diphosphate + [thioredoxin]-disulfide + H2O = a ribonucleoside 5'-diphosphate + [thioredoxin]-dithiol. Functionally, catalyzes the reduction of ribonucleotides to deoxyribonucleotides. May function to provide a pool of deoxyribonucleotide precursors for DNA repair during oxygen limitation and/or for immediate growth after restoration of oxygen. The protein is Vitamin B12-dependent ribonucleotide reductase (nrdJ) of Streptomyces clavuligerus.